A 253-amino-acid chain; its full sequence is Chorismate mutase 2, cytosolic (253 aa).

In terms of domain architecture, Chorismate mutase spans 2 to 253 (DAAGGDQLSL…EVEYLLRRLD (252 aa)).

In terms of assembly, homodimer. Interacts with Cmu1 of the fungal pathogen Ustilago maydis.

It localises to the cytoplasm. Its subcellular location is the cytosol. The enzyme catalyses chorismate = prephenate. It functions in the pathway metabolic intermediate biosynthesis; prephenate biosynthesis; prephenate from chorismate: step 1/1. No allosteric regulation. The polypeptide is Chorismate mutase 2, cytosolic (Zea mays (Maize)).